The following is a 112-amino-acid chain: MEILMSITAGVLFMVGTYLILTKSLLRVVVGLILLSHGAHLLLLTMAGLQRGAPPLLHLEATTYSDPLPQALILTAIVISFGVTSFLLVLAYRTYKEHKTDDLDQLRGSADE.

3 helical membrane-spanning segments follow: residues 4–21 (LMSI…YLIL), 28–50 (VVVG…AGLQ), and 70–92 (QALI…VLAY).

The protein belongs to the CPA3 antiporters (TC 2.A.63) subunit C family. Forms a heterooligomeric complex that consists of seven subunits: MrpA, MrpB, MrpC, MrpD, MrpE, MrpF and MrpG.

Its subcellular location is the cell membrane. Functionally, mnh complex is a Na(+)Li(+)/H(+) antiporter involved in Na(+) and/or Li(+) excretion and Na(+) resistance. Na(+)/H(+) antiport consumes a transmembrane electrical potential, and is thus inferred to be electrogenic. Does not transport K(+), Ca(2+) or Mg(2+). The polypeptide is Na(+)/H(+) antiporter subunit C (mrpC) (Alkalihalophilus pseudofirmus (strain ATCC BAA-2126 / JCM 17055 / OF4) (Bacillus pseudofirmus)).